The sequence spans 211 residues: tRNA (guanine-N(7)-)-methyltransferase (211 aa).

Glu-44, Asp-69, Asp-96, and Asp-118 together coordinate S-adenosyl-L-methionine. Asp-118 is a catalytic residue. A substrate-binding site is contributed by Lys-122. An interaction with RNA region spans residues Arg-124 to Arg-129. Substrate contacts are provided by residues Asp-154 and Thr-191–Glu-194.

This sequence belongs to the class I-like SAM-binding methyltransferase superfamily. TrmB family.

It carries out the reaction guanosine(46) in tRNA + S-adenosyl-L-methionine = N(7)-methylguanosine(46) in tRNA + S-adenosyl-L-homocysteine. The protein operates within tRNA modification; N(7)-methylguanine-tRNA biosynthesis. Its function is as follows. Catalyzes the formation of N(7)-methylguanine at position 46 (m7G46) in tRNA. This is tRNA (guanine-N(7)-)-methyltransferase from Streptococcus equi subsp. zooepidemicus (strain MGCS10565).